Consider the following 302-residue polypeptide: Sulfate adenylyltransferase subunit 2 (302 aa).

Belongs to the PAPS reductase family. CysD subfamily. Heterodimer composed of CysD, the smaller subunit, and CysN.

The enzyme catalyses sulfate + ATP + H(+) = adenosine 5'-phosphosulfate + diphosphate. It functions in the pathway sulfur metabolism; hydrogen sulfide biosynthesis; sulfite from sulfate: step 1/3. In terms of biological role, with CysN forms the ATP sulfurylase (ATPS) that catalyzes the adenylation of sulfate producing adenosine 5'-phosphosulfate (APS) and diphosphate, the first enzymatic step in sulfur assimilation pathway. APS synthesis involves the formation of a high-energy phosphoric-sulfuric acid anhydride bond driven by GTP hydrolysis by CysN coupled to ATP hydrolysis by CysD. In Yersinia enterocolitica serotype O:8 / biotype 1B (strain NCTC 13174 / 8081), this protein is Sulfate adenylyltransferase subunit 2.